A 317-amino-acid polypeptide reads, in one-letter code: R-phycoerythrin gamma chain, chloroplastic (317 aa).

The transit peptide at M1 to M40 directs the protein to the chloroplast. The phycourobilin site is built by C94 and C133. C210 contacts (2R,3E)-phycoerythrobilin. C297 contacts phycourobilin.

In terms of assembly, heteromer of 1 alpha, 1 beta and 2 gamma chains. In terms of processing, contains four covalently linked bilin chromophores.

The protein localises to the plastid. It localises to the chloroplast thylakoid membrane. Functionally, critical for the incorporation of phycoerythrin in the phycobilisome complex. In Aglaothamnion neglectum (Red alga), this protein is R-phycoerythrin gamma chain, chloroplastic.